The following is a 460-amino-acid chain: Glycogen synthase (460 aa).

Lysine 15 provides a ligand contact to ADP-alpha-D-glucose.

The protein belongs to the glycosyltransferase 1 family. Bacterial/plant glycogen synthase subfamily.

It catalyses the reaction [(1-&gt;4)-alpha-D-glucosyl](n) + ADP-alpha-D-glucose = [(1-&gt;4)-alpha-D-glucosyl](n+1) + ADP + H(+). Its pathway is glycan biosynthesis; glycogen biosynthesis. Its function is as follows. Synthesizes alpha-1,4-glucan chains using ADP-glucose. The polypeptide is Glycogen synthase (Trichodesmium erythraeum (strain IMS101)).